We begin with the raw amino-acid sequence, 170 residues long: dCTP pyrophosphatase 1 (170 aa).

The disordered stretch occupies residues 1–25 (MSQAGTGVCGNGGQEDSAAAGPFSF). An N-acetylserine modification is found at serine 2. Serine 2 is modified (phosphoserine). Residues histidine 38 and 47–51 (WEQFH) each bind substrate. 2 residues coordinate Mg(2+): glutamate 63 and glutamate 66. Tryptophan 73 contributes to the substrate binding site. 2 residues coordinate Mg(2+): glutamate 95 and aspartate 98. A substrate-binding site is contributed by tyrosine 102. Residues 149–170 (LSENEAVGSGDPASELGNQAST) are disordered.

As to quaternary structure, homotetramer. The cofactor is Mg(2+).

Its subcellular location is the cytoplasm. It is found in the cytosol. The enzyme catalyses dCTP + H2O = dCMP + diphosphate + H(+). Its function is as follows. Hydrolyzes deoxynucleoside triphosphates (dNTPs) to the corresponding nucleoside monophosphates. Has a strong preference for dCTP and its analogs including 5-iodo-dCTP and 5-methyl-dCTP for which it may even have a higher efficiency. May protect DNA or RNA against the incorporation of these genotoxic nucleotide analogs through their catabolism. The polypeptide is dCTP pyrophosphatase 1 (Rattus norvegicus (Rat)).